The following is a 470-amino-acid chain: Cysteine--tRNA ligase 1 (470 aa).

Cys-29 contributes to the Zn(2+) binding site. The 'HIGH' region motif lies at 31 to 41; that stretch reads PTVYDDAHIGN. Cys-221, His-246, and Glu-250 together coordinate Zn(2+). The 'KMSKS' region motif lies at 279–283; the sequence is KMSKS. Lys-282 contacts ATP.

This sequence belongs to the class-I aminoacyl-tRNA synthetase family. As to quaternary structure, monomer. Zn(2+) is required as a cofactor.

The protein localises to the cytoplasm. It catalyses the reaction tRNA(Cys) + L-cysteine + ATP = L-cysteinyl-tRNA(Cys) + AMP + diphosphate. The polypeptide is Cysteine--tRNA ligase 1 (Burkholderia lata (strain ATCC 17760 / DSM 23089 / LMG 22485 / NCIMB 9086 / R18194 / 383)).